A 158-amino-acid chain; its full sequence is Phosphopantetheine adenylyltransferase (158 aa).

Ser10 is a binding site for substrate. ATP-binding positions include 10 to 11 (SF) and His18. Lys42, Leu74, and Arg88 together coordinate substrate. Residues 89-91 (GLR), Glu99, and 124-130 (YANISSS) each bind ATP.

The protein belongs to the bacterial CoaD family. Homohexamer. Mg(2+) is required as a cofactor.

The protein localises to the cytoplasm. It carries out the reaction (R)-4'-phosphopantetheine + ATP + H(+) = 3'-dephospho-CoA + diphosphate. It participates in cofactor biosynthesis; coenzyme A biosynthesis; CoA from (R)-pantothenate: step 4/5. In terms of biological role, reversibly transfers an adenylyl group from ATP to 4'-phosphopantetheine, yielding dephospho-CoA (dPCoA) and pyrophosphate. This chain is Phosphopantetheine adenylyltransferase, found in Vesicomyosocius okutanii subsp. Calyptogena okutanii (strain HA).